The following is a 311-amino-acid chain: HPr kinase/phosphorylase (311 aa).

Residues histidine 139 and lysine 160 contribute to the active site. 154–161 (GASGVGKS) contributes to the ATP binding site. Serine 161 is a Mg(2+) binding site. Catalysis depends on aspartate 178, which acts as the Proton acceptor; for phosphorylation activity. Proton donor; for dephosphorylation activity. The segment at 202 to 211 (LEIRGIGIID) is important for the catalytic mechanism of both phosphorylation and dephosphorylation. Glutamate 203 contributes to the Mg(2+) binding site. Residue arginine 244 is part of the active site. The important for the catalytic mechanism of dephosphorylation stretch occupies residues 265–270 (PVRPGR).

Belongs to the HPrK/P family. Homohexamer. The cofactor is Mg(2+).

It carries out the reaction [HPr protein]-L-serine + ATP = [HPr protein]-O-phospho-L-serine + ADP + H(+). The enzyme catalyses [HPr protein]-O-phospho-L-serine + phosphate + H(+) = [HPr protein]-L-serine + diphosphate. Its function is as follows. Catalyzes the ATP- as well as the pyrophosphate-dependent phosphorylation of a specific serine residue in HPr, a phosphocarrier protein of the phosphoenolpyruvate-dependent sugar phosphotransferase system (PTS). HprK/P also catalyzes the pyrophosphate-producing, inorganic phosphate-dependent dephosphorylation (phosphorolysis) of seryl-phosphorylated HPr (P-Ser-HPr). The two antagonistic activities of HprK/P are regulated by several intracellular metabolites, which change their concentration in response to the absence or presence of rapidly metabolisable carbon sources (glucose, fructose, etc.) in the growth medium. Therefore, by controlling the phosphorylation state of HPr, HPrK/P is a sensor enzyme that plays a major role in the regulation of carbon metabolism and sugar transport: it mediates carbon catabolite repression (CCR), and regulates PTS-catalyzed carbohydrate uptake and inducer exclusion. The chain is HPr kinase/phosphorylase from Exiguobacterium sibiricum (strain DSM 17290 / CCUG 55495 / CIP 109462 / JCM 13490 / 255-15).